The chain runs to 143 residues: 3-dehydroquinate dehydratase (143 aa).

The Proton acceptor role is filled by Tyr22. The substrate site is built by Asn73, His79, and Asp86. Residue His99 is the Proton donor of the active site. Substrate is bound by residues 100–101 and Arg110; that span reads LS.

It belongs to the type-II 3-dehydroquinase family. In terms of assembly, homododecamer.

The catalysed reaction is 3-dehydroquinate = 3-dehydroshikimate + H2O. Its pathway is metabolic intermediate biosynthesis; chorismate biosynthesis; chorismate from D-erythrose 4-phosphate and phosphoenolpyruvate: step 3/7. Functionally, catalyzes a trans-dehydration via an enolate intermediate. The polypeptide is 3-dehydroquinate dehydratase (Salinispora tropica (strain ATCC BAA-916 / DSM 44818 / JCM 13857 / NBRC 105044 / CNB-440)).